A 348-amino-acid polypeptide reads, in one-letter code: Holliday junction branch migration complex subunit RuvB (348 aa).

Residues 1-20 (MKPPARMVSPERRSDDVGDT) are disordered. Positions 1–183 (MKPPARMVSP…FGIPIRLNFY (183 aa)) are large ATPase domain (RuvB-L). Residues leucine 22, arginine 23, glycine 64, lysine 67, threonine 68, threonine 69, 130 to 132 (EDF), arginine 173, tyrosine 183, and arginine 220 each bind ATP. Residue threonine 68 participates in Mg(2+) binding. The interval 184–254 (TVEELEGIVT…IADHALSALE (71 aa)) is small ATPAse domain (RuvB-S). Residues 257 to 348 (AAGLDAMDRR…QIGLFGNDDD (92 aa)) are head domain (RuvB-H). Residues arginine 293, arginine 312, and arginine 317 each contribute to the DNA site.

It belongs to the RuvB family. In terms of assembly, homohexamer. Forms an RuvA(8)-RuvB(12)-Holliday junction (HJ) complex. HJ DNA is sandwiched between 2 RuvA tetramers; dsDNA enters through RuvA and exits via RuvB. An RuvB hexamer assembles on each DNA strand where it exits the tetramer. Each RuvB hexamer is contacted by two RuvA subunits (via domain III) on 2 adjacent RuvB subunits; this complex drives branch migration. In the full resolvosome a probable DNA-RuvA(4)-RuvB(12)-RuvC(2) complex forms which resolves the HJ.

The protein localises to the cytoplasm. The enzyme catalyses ATP + H2O = ADP + phosphate + H(+). Its function is as follows. The RuvA-RuvB-RuvC complex processes Holliday junction (HJ) DNA during genetic recombination and DNA repair, while the RuvA-RuvB complex plays an important role in the rescue of blocked DNA replication forks via replication fork reversal (RFR). RuvA specifically binds to HJ cruciform DNA, conferring on it an open structure. The RuvB hexamer acts as an ATP-dependent pump, pulling dsDNA into and through the RuvAB complex. RuvB forms 2 homohexamers on either side of HJ DNA bound by 1 or 2 RuvA tetramers; 4 subunits per hexamer contact DNA at a time. Coordinated motions by a converter formed by DNA-disengaged RuvB subunits stimulates ATP hydrolysis and nucleotide exchange. Immobilization of the converter enables RuvB to convert the ATP-contained energy into a lever motion, pulling 2 nucleotides of DNA out of the RuvA tetramer per ATP hydrolyzed, thus driving DNA branch migration. The RuvB motors rotate together with the DNA substrate, which together with the progressing nucleotide cycle form the mechanistic basis for DNA recombination by continuous HJ branch migration. Branch migration allows RuvC to scan DNA until it finds its consensus sequence, where it cleaves and resolves cruciform DNA. This Bradyrhizobium sp. (strain ORS 278) protein is Holliday junction branch migration complex subunit RuvB.